A 344-amino-acid polypeptide reads, in one-letter code: Lipopolysaccharide heptosyltransferase 3 (344 aa).

It belongs to the glycosyltransferase 9 family.

The catalysed reaction is an L-alpha-D-Hep-(1-&gt;3)-4-O-phospho-L-alpha-D-Hep-(1-&gt;5)-[alpha-Kdo-(2-&gt;4)]-alpha-Kdo-(2-&gt;6)-lipid A + ADP-L-glycero-beta-D-manno-heptose = an L-alpha-D-Hep-(1-&gt;7)-L-alpha-D-Hep-(1-&gt;3)-4-O-phospho-L-alpha-D-Hep-(1-&gt;5)-[alpha-Kdo-(2-&gt;4)]-alpha-Kdo-(2-&gt;6)-lipid A + ADP + H(+). It carries out the reaction L-alpha-D-Hep-(1-&gt;3)-4-O-phospho-L-alpha-D-Hep-(1-&gt;5)-[alpha-Kdo-(2-&gt;4)]-alpha-Kdo-(2-&gt;6)-lipid A (E. coli) + ADP-L-glycero-beta-D-manno-heptose = L-alpha-D-Hep-(1-&gt;7)-L-alpha-D-Hep-(1-&gt;3)-4-O-phospho-L-alpha-D-Hep-(1-&gt;5)-[alpha-Kdo-(2-&gt;4)]-alpha-Kdo-(2-&gt;6)-lipid A (E. coli) + ADP + H(+). It participates in bacterial outer membrane biogenesis; LPS core biosynthesis. Its function is as follows. Glycosyltransferase involved in the biosynthesis of the core oligosaccharide region of lipopolysaccharide (LPS). Catalyzes the addition of the third heptose unit (HepIII) to the second heptose unit (HepII) of the phospho-Hep2-Kdo2-lipid A module. In Escherichia coli (strain K12), this protein is Lipopolysaccharide heptosyltransferase 3.